Reading from the N-terminus, the 211-residue chain is tRNA (guanine-N(7)-)-methyltransferase (211 aa).

S-adenosyl-L-methionine contacts are provided by E43, D68, and N117. Residues K121, D153, and 190 to 193 (TEYE) each bind substrate.

The protein belongs to the class I-like SAM-binding methyltransferase superfamily. TrmB family.

The catalysed reaction is guanosine(46) in tRNA + S-adenosyl-L-methionine = N(7)-methylguanosine(46) in tRNA + S-adenosyl-L-homocysteine. Its pathway is tRNA modification; N(7)-methylguanine-tRNA biosynthesis. Functionally, catalyzes the formation of N(7)-methylguanine at position 46 (m7G46) in tRNA. The chain is tRNA (guanine-N(7)-)-methyltransferase from Clostridium acetobutylicum (strain ATCC 824 / DSM 792 / JCM 1419 / IAM 19013 / LMG 5710 / NBRC 13948 / NRRL B-527 / VKM B-1787 / 2291 / W).